The chain runs to 438 residues: Diaminopimelate decarboxylase (438 aa).

An N6-(pyridoxal phosphate)lysine modification is found at Lys73. Residues Ser217, Gly254, and 294 to 297 contribute to the pyridoxal 5'-phosphate site; that span reads EPGR. The substrate site is built by Arg297, Arg333, and Tyr337. The Proton donor role is filled by Cys362. Residues Glu363 and Tyr391 each coordinate substrate. Position 391 (Tyr391) interacts with pyridoxal 5'-phosphate.

It belongs to the Orn/Lys/Arg decarboxylase class-II family. LysA subfamily. Homodimer. Requires pyridoxal 5'-phosphate as cofactor.

The enzyme catalyses meso-2,6-diaminopimelate + H(+) = L-lysine + CO2. It participates in amino-acid biosynthesis; L-lysine biosynthesis via DAP pathway; L-lysine from DL-2,6-diaminopimelate: step 1/1. Competitively inhibited by the substrate analog azelaic acid in vitro but not in vivo. Specifically catalyzes the decarboxylation of meso-diaminopimelate (meso-DAP) to L-lysine. The chain is Diaminopimelate decarboxylase from Methanocaldococcus jannaschii (strain ATCC 43067 / DSM 2661 / JAL-1 / JCM 10045 / NBRC 100440) (Methanococcus jannaschii).